The chain runs to 593 residues: Glyoxylate carboligase (593 aa).

Belongs to the TPP enzyme family. As to quaternary structure, homotetramer. Requires Mg(2+) as cofactor. It depends on thiamine diphosphate as a cofactor.

It catalyses the reaction 2 glyoxylate + H(+) = 2-hydroxy-3-oxopropanoate + CO2. Its pathway is organic acid metabolism; glycolate degradation; 3-phospho-D-glycerate from glycolate: step 2/4. Functionally, catalyzes the condensation of two molecules of glyoxylate to give 2-hydroxy-3-oxopropanoate (also termed tartronate semialdehyde). This Escherichia coli O157:H7 protein is Glyoxylate carboligase (gcl).